A 171-amino-acid polypeptide reads, in one-letter code: Co-chaperone protein HscB (171 aa).

The region spanning 2-74 (DYFTFFGLPA…LMRAEYLLSL (73 aa)) is the J domain.

This sequence belongs to the HscB family. In terms of assembly, interacts with HscA and stimulates its ATPase activity. Interacts with IscU.

Co-chaperone involved in the maturation of iron-sulfur cluster-containing proteins. Seems to help targeting proteins to be folded toward HscA. The sequence is that of Co-chaperone protein HscB from Shigella sonnei (strain Ss046).